An 85-amino-acid chain; its full sequence is Putative membrane protein insertion efficiency factor (85 aa).

This sequence belongs to the UPF0161 family.

It is found in the cell membrane. Its function is as follows. Could be involved in insertion of integral membrane proteins into the membrane. This Leifsonia xyli subsp. xyli (strain CTCB07) protein is Putative membrane protein insertion efficiency factor.